The following is a 409-amino-acid chain: MARAKFERNKPHVNIGTIGHVDHGKTTLTAAITMTLAALGRAKAKKYDEIDQAPEEKARGITINTAHVEYETEKRHYAHVDCPGHADYVKNMITGAAQMDGAILVVSAADGPMPQTREHILLARQVGVPNIVVFLNKKDQLDDPELLELVELEVRELLSKYDFPGDDVPIVAGSALMALEKMASEPKLIRGKDDWVDCIYSLMDAVDAYIPTPERAIDKPFLMAVEDVFSITGRGTVATGRIERGKVKVGETIELVGIRGTRSTTVTGLEMFQKSLDEGLAGDNIGVLLRGIKKEDVERGMVLAKPGSITPHTQFEGEVYILSKEEGGRHTPFFAGYRPQFYVRTTDVTGTIVTFTDDEGKSAEMVMPGDRIKMTVELINPIAIEDGMRFAIREGGRTVGAGVVSKILK.

A tr-type G domain is found at 10 to 214 (KPHVNIGTIG…AVDAYIPTPE (205 aa)). The segment at 19–26 (GHVDHGKT) is G1. Residue 19 to 26 (GHVDHGKT) coordinates GTP. T26 contacts Mg(2+). The interval 60–64 (GITIN) is G2. Positions 81-84 (DCPG) are G3. GTP contacts are provided by residues 81–85 (DCPGH) and 136–139 (NKKD). The G4 stretch occupies residues 136 to 139 (NKKD). The interval 174-176 (SAL) is G5.

This sequence belongs to the TRAFAC class translation factor GTPase superfamily. Classic translation factor GTPase family. EF-Tu/EF-1A subfamily. Monomer.

It localises to the cytoplasm. The catalysed reaction is GTP + H2O = GDP + phosphate + H(+). GTP hydrolase that promotes the GTP-dependent binding of aminoacyl-tRNA to the A-site of ribosomes during protein biosynthesis. The sequence is that of Elongation factor Tu from Gloeobacter violaceus (strain ATCC 29082 / PCC 7421).